Consider the following 518-residue polypeptide: GMP synthase [glutamine-hydrolyzing] (518 aa).

Residues 8 to 201 (TVLIIDFGSQ…VHKISGLKGN (194 aa)) form the Glutamine amidotransferase type-1 domain. The active-site Nucleophile is the C85. Active-site residues include H175 and E177. Residues 202 to 393 (WSMASYRDQA…LGLPEQFLGR (192 aa)) enclose the GMPS ATP-PPase domain. Position 229 to 235 (229 to 235 (SGGVDSS)) interacts with ATP.

In terms of assembly, homodimer.

The catalysed reaction is XMP + L-glutamine + ATP + H2O = GMP + L-glutamate + AMP + diphosphate + 2 H(+). Its pathway is purine metabolism; GMP biosynthesis; GMP from XMP (L-Gln route): step 1/1. Its function is as follows. Catalyzes the synthesis of GMP from XMP. The chain is GMP synthase [glutamine-hydrolyzing] from Bartonella quintana (strain Toulouse) (Rochalimaea quintana).